A 979-amino-acid polypeptide reads, in one-letter code: MPAELLLLLIVAFANPSCQVLSSLRMAAILDDQTVCGRGERLALALAREQINGIIEVPAKARVEVDIFELQRDSQYETTDTMCQILPKGVVSVLGPSSSPASASTVSHICGEKEIPHIKVGPEETPRLQYLRFASVSLYPSNEDVSLAVSRILKSFNYPSASLICAKAECLLRLEELVRGFLISKETLSVRMLDDSRDPTPLLKEIRDDKVSTIIIDANASISHLVLRKASELGMTSAFYKYILTTMDFPILHLDGIVEDSSNILGFSMFNTSHPFYPEFVRSLNMSWRENCEASTYPGPALSAALMFDAVHVVVSAVRELNRSQEIGVKPLACTSANIWPHGTSLMNYLRMVEYDGLTGRVEFNSKGQRTNYTLRILEKSRQGHREIGVWYSNRTLAMNATTLDINLSQTLANKTLVVTTILENPYVMRRPNFQALSGNERFEGFCVDMLRELAELLRFRYRLRLVEDGLYGAPEPNGSWTGMVGELINRKADLAVAAFTITAEREKVIDFSKPFMTLGISILYRVHMGRKPGYFSFLDPFSPAVWLFMLLAYLAVSCVLFLAARLSPYEWYNPHPCLRARPHILENQYTLGNSLWFPVGGFMQQGSEIMPRALSTRCVSGVWWAFTLIIISSYTANLAAFLTVQRMEVPVESADDLADQTNIEYGTIHAGSTMTFFQNSRYQTYQRMWNYMQSKQPSVFVKSTEEGIARVLNSRYAFLLESTMNEYHRRLNCNLTQIGGLLDTKGYGIGMPLGSPFRDEITLAILQLQENNRLEILKRKWWEGGRCPKEEDHRAKGLGMENIGGIFVVLICGLIIAVFVAVMEFIWSTRRSAESEEVSVCQEMLQELRHAVSCRKTSRSRRRRRPGGPSRALLSLRAVREMRLSNGKLYSAGAGGDAGAHGGPQRLLDDPGPPGGPRPQAPTPCTHVRVCQECRRIQALRASGAGAPPRGLGTPAEATSPPRPRPGPTGPRELTEHE.

The first 14 residues, 1–14 (MPAELLLLLIVAFA), serve as a signal peptide directing secretion. At 15–544 (NPSCQVLSSL…YFSFLDPFSP (530 aa)) the chain is on the extracellular side. Disulfide bonds link cysteine 36-cysteine 292, cysteine 83-cysteine 334, and cysteine 165-cysteine 170. Asparagine 219, asparagine 271, asparagine 285, asparagine 322, asparagine 372, asparagine 394, asparagine 400, asparagine 407, asparagine 414, and asparagine 478 each carry an N-linked (GlcNAc...) asparagine glycan. The helical transmembrane segment at 545-565 (AVWLFMLLAYLAVSCVLFLAA) threads the bilayer. The Cytoplasmic portion of the chain corresponds to 566–622 (RLSPYEWYNPHPCLRARPHILENQYTLGNSLWFPVGGFMQQGSEIMPRALSTRCVSG). The helical transmembrane segment at 623 to 643 (VWWAFTLIIISSYTANLAAFL) threads the bilayer. Residues 644 to 803 (TVQRMEVPVE…HRAKGLGMEN (160 aa)) are Extracellular-facing. The N-linked (GlcNAc...) asparagine glycan is linked to asparagine 735. Residues 804 to 824 (IGGIFVVLICGLIIAVFVAVM) traverse the membrane as a helical segment. The Cytoplasmic portion of the chain corresponds to 825-979 (EFIWSTRRSA…TGPRELTEHE (155 aa)). Positions 856–867 (RKTSRSRRRRRP) are enriched in basic residues. Disordered regions lie at residues 856–875 (RKTS…RALL), 890–925 (LYSA…APTP), and 942–979 (RASG…TEHE). Residues 894–903 (GAGGDAGAHG) show a composition bias toward gly residues. Over residues 912-923 (PGPPGGPRPQAP) the composition is skewed to pro residues.

This sequence belongs to the glutamate-gated ion channel (TC 1.A.10.1) family. GRIK5 subfamily. Homotetramer. Heterotetramer with GRIK2. Can form functional heteromeric receptors with GRIK1, GRIK2 and GRIK3. Forms a heteromeric complex with GRIK2. In terms of tissue distribution, expressed in the hippocampal mossy fiber synapses (at protein level).

The protein resides in the cell membrane. It is found in the postsynaptic cell membrane. Its subcellular location is the presynaptic cell membrane. Its function is as follows. Ionotropic glutamate receptor that functions as a cation-permeable ligand-gated ion channel, gated by L-glutamate and the glutamatergic agonist kainic acid. Cannot form functional channels on its own and produces channel activity only in heteromeric assembly with GRIK2 subunit. Can form functional heteromeric receptors with GRIK1 and GRIK3. This is Glutamate receptor ionotropic, kainate 5 (Grik5) from Mus musculus (Mouse).